The sequence spans 349 residues: Quinone oxidoreductase-like protein 1 (349 aa).

This sequence belongs to the zinc-containing alcohol dehydrogenase family. Quinone oxidoreductase subfamily. Homodimer. Component of the FERRY complex composed of five subunits, TBCK, PPP1R21, FERRY3, CRYZL1 and GATD1 with a ratio of 1:2:1:2:4, respectively. In terms of tissue distribution, ubiquitous.

Its subcellular location is the early endosome. Its function is as follows. Component of the FERRY complex (Five-subunit Endosomal Rab5 and RNA/ribosome intermediary). The FERRY complex directly interacts with mRNAs and RAB5A, and functions as a RAB5A effector involved in the localization and the distribution of specific mRNAs most likely by mediating their endosomal transport. The complex recruits mRNAs and ribosomes to early endosomes through direct mRNA-interaction. The polypeptide is Quinone oxidoreductase-like protein 1 (CRYZL1) (Homo sapiens (Human)).